Here is a 369-residue protein sequence, read N- to C-terminus: Small ribosomal subunit biogenesis GTPase RsgA (369 aa).

The 156-residue stretch at 116 to 271 folds into the CP-type G domain; the sequence is GEQLIAANLD…LIDNPGIREI (156 aa). GTP-binding positions include 161 to 164 and 213 to 221; these read NKID and GSSGVGKST. 4 residues coordinate Zn(2+): cysteine 294, cysteine 299, histidine 301, and cysteine 307.

It belongs to the TRAFAC class YlqF/YawG GTPase family. RsgA subfamily. Monomer. Associates with 30S ribosomal subunit, binds 16S rRNA. It depends on Zn(2+) as a cofactor.

The protein localises to the cytoplasm. One of several proteins that assist in the late maturation steps of the functional core of the 30S ribosomal subunit. Helps release RbfA from mature subunits. May play a role in the assembly of ribosomal proteins into the subunit. Circularly permuted GTPase that catalyzes slow GTP hydrolysis, GTPase activity is stimulated by the 30S ribosomal subunit. This is Small ribosomal subunit biogenesis GTPase RsgA from Methanosarcina acetivorans (strain ATCC 35395 / DSM 2834 / JCM 12185 / C2A).